The chain runs to 585 residues: Polyadenylate-binding protein, cytoplasmic and nuclear (585 aa).

Residues 14-37 (QLKIEEQTAPTTTESETPKVETSG) are disordered. RRM domains are found at residues 38–116 (ASLY…WSQR), 126–203 (GNIY…LHVS), 219–296 (TNVY…RAQK), and 322–399 (VNLF…IAQR). In terms of domain architecture, PABC spans 488–567 (GQFPRNGQQQ…AHAAYQKFKE (80 aa)).

The protein belongs to the polyadenylate-binding protein type-1 family.

The protein localises to the cytoplasm. The protein resides in the nucleus. In terms of biological role, binds the poly(A) tail of mRNA. Appears to be an important mediator of the multiple roles of the poly(A) tail in mRNA biogenesis, stability and translation. In the nucleus, involved in both mRNA cleavage and polyadenylation. Is also required for efficient mRNA export to the cytoplasm. Acts in concert with a poly(A)-specific nuclease (PAN) to affect poly(A) tail shortening, which may occur concomitantly with either nucleocytoplasmic mRNA transport or translational initiation. In the cytoplasm, stimulates translation initiation and regulates mRNA decay through translation termination-coupled poly(A) shortening, probably mediated by PAN. The chain is Polyadenylate-binding protein, cytoplasmic and nuclear (PAB1) from Eremothecium gossypii (strain ATCC 10895 / CBS 109.51 / FGSC 9923 / NRRL Y-1056) (Yeast).